The sequence spans 367 residues: Carbamoyl-phosphate synthase (367 aa).

The ATP-grasp domain maps to 111–296 (KEFYNEIGVP…SLCELVNMAA (186 aa)). An ATP-binding site is contributed by 137–186 (KMEFPVVLKQGQGQGGKDIKVAESLDDVKEYFEEFDHALCEKFIEGSEIS). 3 residues coordinate Mg(2+): aspartate 253, glutamate 267, and asparagine 269. 3 residues coordinate Mn(2+): aspartate 253, glutamate 267, and asparagine 269.

The protein belongs to the small carbamoyl-phosphate synthase family. As to quaternary structure, forms homodimers and homotetramers (dimers of dimers). It depends on Mg(2+) as a cofactor. The cofactor is Mn(2+).

It catalyses the reaction hydrogencarbonate + NH4(+) + 2 ATP = carbamoyl phosphate + 2 ADP + phosphate + 2 H(+). In terms of biological role, catalyzes the synthesis of carbamoyl phosphate from ATP, ammonium and bicarbonate. Proceeds via a three-step mechanism, i.e. the phosphorylation of hydrogencarbonate to carboxyphosphate, a nucleophilic attack of ammonia on carboxyphosphate yielding carbamate, and the phosphorylation of carbamate forming carbamoyl phosphate. In M.smithii, the predominant archaeon in the human gut, one function of this enzyme may be to sequester ammonia, a scarce nutrient in the intestine which is the major source of nitrogen in M.smithii for the biosynthesis of nucleotides, amino acids, and many other metabolites. This chain is Carbamoyl-phosphate synthase, found in Methanobrevibacter smithii (strain ATCC 35061 / DSM 861 / OCM 144 / PS).